The sequence spans 351 residues: Transmembrane protein 115 (351 aa).

The Cytoplasmic portion of the chain corresponds to 1 to 19 (MQRALPGARQHLGAILASA). The segment at 1–205 (MQRALPGARQ…FGLLSSWVYL (205 aa)) is mediates homooligomerization. A helical transmembrane segment spans residues 20–40 (SVVVKALCAAVLFLYLLSFAV). Over 41-97 (DTGCLAVTPGYLFPPNFWIWTLATHGLMEQHVWDVAISLTTVVVAGRLLEPLWGALE) the chain is Lumenal. The chain crosses the membrane as a helical span at residues 98–118 (LLIFFSVVNVSVGLLGAFAYL). Residues 119–126 (LTYMASFN) are Cytoplasmic-facing. Residues 127–147 (LVYLFTVRIHGALGFLGGVLV) traverse the membrane as a helical segment. At 148 to 165 (ALKQTMGDCVVLRVPQVR) the chain is on the lumenal side. The helical transmembrane segment at 166–186 (VSVMPMLLLALLLLLRLATLL) threads the bilayer. Topologically, residues 187–351 (QSPALASYGF…ITFEAAPPTL (165 aa)) are cytoplasmic. The segment at 206-229 (RFYQRHSRGRGDMADHFAFATFFP) is mediates localization to the Golgi. The interval 301–351 (QSIWPSMDDDEEESGAKVDSPLPSDKAPTPPGKGAAPESSLITFEAAPPTL) is disordered. Thr-329 is subject to Phosphothreonine.

It belongs to the TMEM115 family. As to quaternary structure, homooligomer. Interacts with COPB1. May interact with LMAN1. Interacts with the COG complex; probably through COG3. As to expression, expressed strongly in kidney and skeletal muscle, followed by liver, placenta, pancreas, and lung, with low amounts in heart and only traces in brain. Widely expressed with ubiquitous expression in epithelial tissues (at protein level).

Its subcellular location is the golgi apparatus. It is found in the golgi stack membrane. In terms of biological role, may play a role in retrograde transport of proteins from the Golgi to the endoplasmic reticulum. May indirectly play a role in protein glycosylation in the Golgi. This chain is Transmembrane protein 115, found in Homo sapiens (Human).